The primary structure comprises 293 residues: DegV domain-containing protein MG326 homolog (293 aa).

One can recognise a DegV domain in the interval 3–289 (TAIITDSTAS…IDAFSISLLL (287 aa)). 2 residues coordinate hexadecanoate: Thr62 and Ser94.

In terms of biological role, may bind long-chain fatty acids, such as palmitate, and may play a role in lipid transport or fatty acid metabolism. This chain is DegV domain-containing protein MG326 homolog, found in Mycoplasma pneumoniae (strain ATCC 29342 / M129 / Subtype 1) (Mycoplasmoides pneumoniae).